A 51-amino-acid polypeptide reads, in one-letter code: Protein SspM (51 aa).

This sequence belongs to the alpha/beta-type SASP family.

The polypeptide is Protein SspM (sspM) (Mycolicibacterium phlei (Mycobacterium phlei)).